A 461-amino-acid chain; its full sequence is Argininosuccinate lyase (461 aa).

The protein belongs to the lyase 1 family. Argininosuccinate lyase subfamily.

Its subcellular location is the cytoplasm. It carries out the reaction 2-(N(omega)-L-arginino)succinate = fumarate + L-arginine. Its pathway is amino-acid biosynthesis; L-arginine biosynthesis; L-arginine from L-ornithine and carbamoyl phosphate: step 3/3. The chain is Argininosuccinate lyase from Aeromonas hydrophila subsp. hydrophila (strain ATCC 7966 / DSM 30187 / BCRC 13018 / CCUG 14551 / JCM 1027 / KCTC 2358 / NCIMB 9240 / NCTC 8049).